Consider the following 92-residue polypeptide: Transcription factor PRE1 (92 aa).

In terms of domain architecture, bHLH spans Arg-4–Leu-59.

In terms of assembly, interacts with IBH1 and HFR1. In terms of tissue distribution, expressed in roots, leaves, stems and flowers.

Its subcellular location is the nucleus. Its function is as follows. Atypical and probable non DNA-binding bHLH transcription factor that integrates multiple signaling pathways to regulate cell elongation and plant development. Binds IBH1, forming a pair of antagonistic bHLH transcription factors that function downstream of BZR1 to mediate brassinosteroid regulation of cell elongation. Regulates light responses by binding and inhibiting the activity of the bHLH transcription factor HFR1, a critical regulator of light signaling and shade avoidance. May have a regulatory role in various aspects of gibberellin-dependent growth and development. The polypeptide is Transcription factor PRE1 (PRE1) (Arabidopsis thaliana (Mouse-ear cress)).